We begin with the raw amino-acid sequence, 623 residues long: DELLA protein RHT-1 (623 aa).

The tract at residues 1–27 (MKREYQDAGGSGGGGGGMGSSEDKMMV) is disordered. Residues 9-19 (GGSGGGGGGMG) are compositionally biased toward gly residues. Positions 38–42 (DELLA) match the DELLA motif motif. Disordered stretches follow at residues 109–138 (LNAPPPPLPPAPQLNASTSSTVTGSGGYFD) and 159–201 (AGAT…GARS). Pro residues predominate over residues 111–120 (APPPPLPPAP). Low complexity-rich tracts occupy residues 121–131 (QLNASTSSTVT) and 181–201 (GGSSTSSSSSSSSSLGGGARS). The region spanning 225-619 (VDTQEAGIRL…RPLIATSAWR (395 aa)) is the GRAS domain. The tract at residues 232 to 288 (IRLVHALLACAEAVQQENLSAAEALVKQIPLLAASQGGAMRKVAAYFGEALARRVFR) is leucine repeat I (LRI). The short motif at 239-243 (LACAE) is the LxCxE motif element. Residues 307–372 (HAHFYESCPY…GGPPSFRLTG (66 aa)) are VHIID. Positions 338–342 (VHVVD) match the VHIID motif. The tract at residues 386–425 (QVGWKLAQFAHTIRVDFQYRGLVAATLADLEPFMLQPEGE) is leucine repeat II (LRII). The segment at 435–540 (IAVNSVFEMH…EVYLGRQICN (106 aa)) is PFYRE. The segment at 543–619 (ACEGAERTER…RPLIATSAWR (77 aa)) is SAW.

The protein belongs to the GRAS family. DELLA subfamily. Phosphorylated. Post-translationally, ubiquitinated. Upon GA application it is ubiquitinated, leading to its subsequent degradation.

Its subcellular location is the nucleus. In terms of biological role, probable transcriptional regulator that acts as a repressor of the gibberellin (GA) signaling pathway. Probably acts by participating in large multiprotein complexes that repress transcription of GA-inducible genes. Upon GA application, it is degraded by the proteasome, allowing the GA signaling pathway. The polypeptide is DELLA protein RHT-1 (RHT1) (Triticum aestivum (Wheat)).